The sequence spans 417 residues: Serine hydroxymethyltransferase (417 aa).

(6S)-5,6,7,8-tetrahydrofolate-binding positions include L121 and 125-127 (GHL). K229 carries the post-translational modification N6-(pyridoxal phosphate)lysine. 355–357 (SPF) contributes to the (6S)-5,6,7,8-tetrahydrofolate binding site.

The protein belongs to the SHMT family. In terms of assembly, homodimer. Pyridoxal 5'-phosphate serves as cofactor.

The protein resides in the cytoplasm. The catalysed reaction is (6R)-5,10-methylene-5,6,7,8-tetrahydrofolate + glycine + H2O = (6S)-5,6,7,8-tetrahydrofolate + L-serine. The protein operates within one-carbon metabolism; tetrahydrofolate interconversion. It participates in amino-acid biosynthesis; glycine biosynthesis; glycine from L-serine: step 1/1. Functionally, catalyzes the reversible interconversion of serine and glycine with tetrahydrofolate (THF) serving as the one-carbon carrier. This reaction serves as the major source of one-carbon groups required for the biosynthesis of purines, thymidylate, methionine, and other important biomolecules. Also exhibits THF-independent aldolase activity toward beta-hydroxyamino acids, producing glycine and aldehydes, via a retro-aldol mechanism. The chain is Serine hydroxymethyltransferase from Salmonella paratyphi C (strain RKS4594).